Consider the following 229-residue polypeptide: GTP cyclohydrolase 1 (229 aa).

The tract at residues 1–26 (MDAKIKPIRGTNPAEGRPEFQPAELE) is disordered. The Zn(2+) site is built by Cys118, His121, and Cys189.

The protein belongs to the GTP cyclohydrolase I family. As to quaternary structure, toroid-shaped homodecamer, composed of two pentamers of five dimers.

It carries out the reaction GTP + H2O = 7,8-dihydroneopterin 3'-triphosphate + formate + H(+). It participates in cofactor biosynthesis; 7,8-dihydroneopterin triphosphate biosynthesis; 7,8-dihydroneopterin triphosphate from GTP: step 1/1. This is GTP cyclohydrolase 1 from Rhodopseudomonas palustris (strain ATCC BAA-98 / CGA009).